We begin with the raw amino-acid sequence, 274 residues long: Aliphatic sulfonates import ATP-binding protein SsuB 2 (274 aa).

The region spanning 21 to 242 (LALRGVARRF…SRGSARLAAL (222 aa)) is the ABC transporter domain. Position 53-60 (53-60 (GRSGCGKS)) interacts with ATP.

Belongs to the ABC transporter superfamily. Aliphatic sulfonates importer (TC 3.A.1.17.2) family. The complex is composed of two ATP-binding proteins (SsuB), two transmembrane proteins (SsuC) and a solute-binding protein (SsuA).

It localises to the cell inner membrane. It carries out the reaction ATP + H2O + aliphatic sulfonate-[sulfonate-binding protein]Side 1 = ADP + phosphate + aliphatic sulfonateSide 2 + [sulfonate-binding protein]Side 1.. Its function is as follows. Part of the ABC transporter complex SsuABC involved in aliphatic sulfonates import. Responsible for energy coupling to the transport system. This Pseudomonas aeruginosa (strain UCBPP-PA14) protein is Aliphatic sulfonates import ATP-binding protein SsuB 2.